Consider the following 949-residue polypeptide: Glycine dehydrogenase (decarboxylating) (949 aa).

Lysine 700 is subject to N6-(pyridoxal phosphate)lysine.

It belongs to the GcvP family. As to quaternary structure, the glycine cleavage system is composed of four proteins: P, T, L and H. The cofactor is pyridoxal 5'-phosphate.

The catalysed reaction is N(6)-[(R)-lipoyl]-L-lysyl-[glycine-cleavage complex H protein] + glycine + H(+) = N(6)-[(R)-S(8)-aminomethyldihydrolipoyl]-L-lysyl-[glycine-cleavage complex H protein] + CO2. Functionally, the glycine cleavage system catalyzes the degradation of glycine. The P protein binds the alpha-amino group of glycine through its pyridoxal phosphate cofactor; CO(2) is released and the remaining methylamine moiety is then transferred to the lipoamide cofactor of the H protein. This Christiangramia forsetii (strain DSM 17595 / CGMCC 1.15422 / KT0803) (Gramella forsetii) protein is Glycine dehydrogenase (decarboxylating).